Consider the following 159-residue polypeptide: Probable RNA-binding protein EIF1AD (159 aa).

The S1-like domain maps to 18–93; sequence MMEDDYALPT…VKAEICKILT (76 aa). The segment at 109–159 is disordered; the sequence is KFTKKPVQEEATSQNKDDSDFEDDLLPNTNRPVNRDSSDEEEDEETSSEED. The segment covering 146–159 has biased composition (acidic residues); the sequence is SDEEEDEETSSEED.

This sequence belongs to the EIF1AD family.

This Drosophila melanogaster (Fruit fly) protein is Probable RNA-binding protein EIF1AD.